Here is a 339-residue protein sequence, read N- to C-terminus: Phenylalanine--tRNA ligase alpha subunit (339 aa).

Glu247 provides a ligand contact to Mg(2+).

Belongs to the class-II aminoacyl-tRNA synthetase family. Phe-tRNA synthetase alpha subunit type 1 subfamily. As to quaternary structure, tetramer of two alpha and two beta subunits. The cofactor is Mg(2+).

It is found in the cytoplasm. The enzyme catalyses tRNA(Phe) + L-phenylalanine + ATP = L-phenylalanyl-tRNA(Phe) + AMP + diphosphate + H(+). The polypeptide is Phenylalanine--tRNA ligase alpha subunit (Deinococcus deserti (strain DSM 17065 / CIP 109153 / LMG 22923 / VCD115)).